We begin with the raw amino-acid sequence, 435 residues long: 3-phosphoshikimate 1-carboxyvinyltransferase (435 aa).

Residues Lys-23, Ser-24, and Arg-28 each coordinate 3-phosphoshikimate. Lys-23 is a binding site for phosphoenolpyruvate. Gly-97 and Arg-125 together coordinate phosphoenolpyruvate. Ser-170, Ser-171, Gln-172, Ser-198, Asp-314, Asn-338, and Lys-342 together coordinate 3-phosphoshikimate. Residue Gln-172 participates in phosphoenolpyruvate binding. Asp-314 acts as the Proton acceptor in catalysis. Arg-346, Arg-388, and Lys-413 together coordinate phosphoenolpyruvate.

It belongs to the EPSP synthase family. As to quaternary structure, monomer.

Its subcellular location is the cytoplasm. It carries out the reaction 3-phosphoshikimate + phosphoenolpyruvate = 5-O-(1-carboxyvinyl)-3-phosphoshikimate + phosphate. Its pathway is metabolic intermediate biosynthesis; chorismate biosynthesis; chorismate from D-erythrose 4-phosphate and phosphoenolpyruvate: step 6/7. Catalyzes the transfer of the enolpyruvyl moiety of phosphoenolpyruvate (PEP) to the 5-hydroxyl of shikimate-3-phosphate (S3P) to produce enolpyruvyl shikimate-3-phosphate and inorganic phosphate. In Sodalis glossinidius (strain morsitans), this protein is 3-phosphoshikimate 1-carboxyvinyltransferase.